The sequence spans 142 residues: Large ribosomal subunit protein uL13 (142 aa).

It belongs to the universal ribosomal protein uL13 family. In terms of assembly, part of the 50S ribosomal subunit.

This protein is one of the early assembly proteins of the 50S ribosomal subunit, although it is not seen to bind rRNA by itself. It is important during the early stages of 50S assembly. The sequence is that of Large ribosomal subunit protein uL13 from Methylococcus capsulatus (strain ATCC 33009 / NCIMB 11132 / Bath).